The primary structure comprises 184 residues: Protein YrdA (184 aa).

It belongs to the gamma-class carbonic anhydrase family.

This is Protein YrdA (yrdA) from Escherichia coli (strain K12).